Consider the following 413-residue polypeptide: Multifunctional CCA protein (413 aa).

Positions 8 and 11 each coordinate ATP. Residues Gly8 and Arg11 each coordinate CTP. Mg(2+) contacts are provided by Asp21 and Asp23. Arg91, Arg141, and Arg144 together coordinate ATP. Residues Arg91, Arg141, and Arg144 each contribute to the CTP site. One can recognise an HD domain in the interval 230–331 (TGAHLLLVLD…VRLLERCDAL (102 aa)).

Belongs to the tRNA nucleotidyltransferase/poly(A) polymerase family. Bacterial CCA-adding enzyme type 1 subfamily. In terms of assembly, monomer. Can also form homodimers and oligomers. Requires Mg(2+) as cofactor. Ni(2+) serves as cofactor.

The catalysed reaction is a tRNA precursor + 2 CTP + ATP = a tRNA with a 3' CCA end + 3 diphosphate. The enzyme catalyses a tRNA with a 3' CCA end + 2 CTP + ATP = a tRNA with a 3' CCACCA end + 3 diphosphate. In terms of biological role, catalyzes the addition and repair of the essential 3'-terminal CCA sequence in tRNAs without using a nucleic acid template. Adds these three nucleotides in the order of C, C, and A to the tRNA nucleotide-73, using CTP and ATP as substrates and producing inorganic pyrophosphate. tRNA 3'-terminal CCA addition is required both for tRNA processing and repair. Also involved in tRNA surveillance by mediating tandem CCA addition to generate a CCACCA at the 3' terminus of unstable tRNAs. While stable tRNAs receive only 3'-terminal CCA, unstable tRNAs are marked with CCACCA and rapidly degraded. This chain is Multifunctional CCA protein, found in Verminephrobacter eiseniae (strain EF01-2).